A 357-amino-acid polypeptide reads, in one-letter code: DNA replication and repair protein RecF (357 aa).

Position 30–37 (30–37 (GANGSGKT)) interacts with ATP.

Belongs to the RecF family.

The protein localises to the cytoplasm. Its function is as follows. The RecF protein is involved in DNA metabolism; it is required for DNA replication and normal SOS inducibility. RecF binds preferentially to single-stranded, linear DNA. It also seems to bind ATP. The chain is DNA replication and repair protein RecF from Salmonella heidelberg (strain SL476).